Reading from the N-terminus, the 141-residue chain is NADPH-dependent 7-cyano-7-deazaguanine reductase (141 aa).

Cys-34 functions as the Thioimide intermediate in the catalytic mechanism. Catalysis depends on Asp-41, which acts as the Proton donor. Substrate contacts are provided by residues Val-56–Leu-58 and His-75–Glu-76.

The protein belongs to the GTP cyclohydrolase I family. QueF type 1 subfamily.

It is found in the cytoplasm. The catalysed reaction is 7-aminomethyl-7-carbaguanine + 2 NADP(+) = 7-cyano-7-deazaguanine + 2 NADPH + 3 H(+). It functions in the pathway tRNA modification; tRNA-queuosine biosynthesis. In terms of biological role, catalyzes the NADPH-dependent reduction of 7-cyano-7-deazaguanine (preQ0) to 7-aminomethyl-7-deazaguanine (preQ1). The polypeptide is NADPH-dependent 7-cyano-7-deazaguanine reductase (Acidithiobacillus ferrooxidans (strain ATCC 23270 / DSM 14882 / CIP 104768 / NCIMB 8455) (Ferrobacillus ferrooxidans (strain ATCC 23270))).